A 434-amino-acid polypeptide reads, in one-letter code: Glutamate-1-semialdehyde 2,1-aminomutase (434 aa).

Position 266 is an N6-(pyridoxal phosphate)lysine (K266).

Belongs to the class-III pyridoxal-phosphate-dependent aminotransferase family. HemL subfamily. In terms of assembly, homodimer. It depends on pyridoxal 5'-phosphate as a cofactor.

It localises to the cytoplasm. The enzyme catalyses (S)-4-amino-5-oxopentanoate = 5-aminolevulinate. It participates in porphyrin-containing compound metabolism; protoporphyrin-IX biosynthesis; 5-aminolevulinate from L-glutamyl-tRNA(Glu): step 2/2. The chain is Glutamate-1-semialdehyde 2,1-aminomutase from Fusobacterium nucleatum subsp. nucleatum (strain ATCC 25586 / DSM 15643 / BCRC 10681 / CIP 101130 / JCM 8532 / KCTC 2640 / LMG 13131 / VPI 4355).